Consider the following 191-residue polypeptide: Calcium-activated potassium channel subunit beta-1 (191 aa).

Residues 1-18 (MGKKLVMAQKRGETRALC) are Cytoplasmic-facing. Residues 19–39 (LGVAMVVCAAITYYVLGTTVL) traverse the membrane as a helical segment. At 40-155 (PLYQKSVWTQ…VVYQRLYGPQ (116 aa)) the chain is on the extracellular side. 2 N-linked (GlcNAc...) asparagine glycosylation sites follow: asparagine 80 and asparagine 142. A helical membrane pass occupies residues 156-176 (VLLFSFFWPTFLLTGGLLLIA). Residues 177-191 (MVKLNRSLSILAAQK) are Cytoplasmic-facing.

This sequence belongs to the KCNMB (TC 8.A.14.1) family. KCNMB1 subfamily. Interacts with KCNMA1 tetramer. There are probably 4 molecules of KCMNB1 per KCNMA1 tetramer. N-glycosylated. As to expression, expressed in many tissues containing smooth muscles. In brain and heart, it is not expressed except in the vasculature, such as cerebral arteries, aorta and corona arteries.

It is found in the membrane. In terms of biological role, regulatory subunit of the calcium activated potassium KCNMA1 (maxiK) channel. Modulates the calcium sensitivity and gating kinetics of KCNMA1, thereby contributing to KCNMA1 channel diversity. Increases the apparent Ca(2+)/voltage sensitivity of the KCNMA1 channel. It also modifies KCNMA1 channel kinetics and alters its pharmacological properties. It slows down the activation and the deactivation kinetics of the channel. Acts as a negative regulator of smooth muscle contraction by enhancing the calcium sensitivity to KCNMA1. Its presence is also a requirement for internal binding of the KCNMA1 channel opener dehydrosoyasaponin I (DHS-1) triterpene glycoside and for external binding of the agonist hormone 17-beta-estradiol (E2). Increases the binding activity of charybdotoxin (CTX) toxin to KCNMA1 peptide blocker by increasing the CTX association rate and decreasing the dissociation rate. The sequence is that of Calcium-activated potassium channel subunit beta-1 (Kcnmb1) from Mus musculus (Mouse).